The primary structure comprises 285 residues: Eukaryotic translation initiation factor 3 subunit F-2 (285 aa).

The MPN domain maps to 11 to 145; it reads VLIKPLVLFQ…TRLYCAVEIG (135 aa).

Belongs to the eIF-3 subunit F family. In terms of assembly, component of the eukaryotic translation initiation factor 3 (eIF-3) complex. The eIF-3 complex interacts with pix.

It localises to the cytoplasm. Functionally, component of the eukaryotic translation initiation factor 3 (eIF-3) complex, which is involved in protein synthesis of a specialized repertoire of mRNAs and, together with other initiation factors, stimulates binding of mRNA and methionyl-tRNAi to the 40S ribosome. The eIF-3 complex specifically targets and initiates translation of a subset of mRNAs involved in cell proliferation. This is Eukaryotic translation initiation factor 3 subunit F-2 from Drosophila erecta (Fruit fly).